The chain runs to 420 residues: E3 ubiquitin protein ligase DRIP2 (420 aa).

The segment at 20-61 (CPLCDKLLRDATTISECLHTFCRKCIYEKITEDEIESCPVCD) adopts an RING-type zinc-finger fold. Residues 113–123 (ISSLVVSTPRV) show a composition bias toward polar residues. 2 disordered regions span residues 113-201 (ISSL…KDVD) and 226-289 (DPKS…TFGD). Basic and acidic residues predominate over residues 154-165 (KKEEEFGDDHVE). Composition is skewed to polar residues over residues 166-194 (SASS…SLSN) and 232-242 (GNASHNDVQGS). A compositionally biased stretch (basic residues) spans 244–253 (TKTKDHKRKC). Polar residues predominate over residues 260-273 (SNNGDPTTSETATL). Residues 274–284 (KRTRRTRRKRS) are compositionally biased toward basic residues.

As to quaternary structure, interacts with DREB2A. Post-translationally, auto-ubiquitinated. Expressed in roots, leaves and flowers.

The catalysed reaction is S-ubiquitinyl-[E2 ubiquitin-conjugating enzyme]-L-cysteine + [acceptor protein]-L-lysine = [E2 ubiquitin-conjugating enzyme]-L-cysteine + N(6)-ubiquitinyl-[acceptor protein]-L-lysine.. Its pathway is protein modification; protein ubiquitination. Functionally, E3 ubiquitin-protein ligase that acts as a negative regulator of the response to water stress. Mediates ubiquitination and subsequent proteasomal degradation of the drought-induced transcriptional activator DREB2A. Functionally redundant with DRIP1. This chain is E3 ubiquitin protein ligase DRIP2 (DRIP2), found in Arabidopsis thaliana (Mouse-ear cress).